The sequence spans 78 residues: U-scoloptoxin(15)-Ssm2a (78 aa).

Residues 1–23 (MEKKIIFLCFFVSLLTLPEFISS) form the signal peptide. Positions 34–37 (PEKK) are important for inhibition of KCNQ4. 2 cysteine pairs are disulfide-bonded: Cys-44–Cys-70 and Cys-48–Cys-72.

Belongs to the SLPTX(15) family. Expressed by the venom gland.

It is found in the secreted. The sequence is that of U-scoloptoxin(15)-Ssm2a from Scolopendra mutilans (Chinese red-headed centipede).